Here is a 914-residue protein sequence, read N- to C-terminus: Coatomer subunit beta' (914 aa).

WD repeat units lie at residues 13–54 (SRSD…KDFE), 55–94 (VCDV…KVHS), 97–136 (AHSD…ACQR), 140–180 (GHTH…ANFT), 183–224 (GHEK…CVQT), 227–266 (GHAQ…LETC), and 352–390 (ACEI…NKAF).

This sequence belongs to the WD repeat COPB2 family. As to quaternary structure, oligomeric complex that consists of at least the alpha, beta, beta', gamma, delta, epsilon and zeta subunits.

Its subcellular location is the cytoplasm. The protein resides in the golgi apparatus membrane. It localises to the cytoplasmic vesicle. The protein localises to the COPI-coated vesicle membrane. Its function is as follows. The coatomer is a cytosolic protein complex that binds to dilysine motifs and reversibly associates with Golgi non-clathrin-coated vesicles, which further mediate biosynthetic protein transport from the ER, via the Golgi up to the trans Golgi network. Coatomer complex is required for budding from Golgi membranes, and is essential for the retrograde Golgi-to-ER transport of dilysine-tagged proteins. The polypeptide is Coatomer subunit beta' (Drosophila melanogaster (Fruit fly)).